Reading from the N-terminus, the 220-residue chain is Thiopurine S-methyltransferase (220 aa).

S-adenosyl-L-methionine is bound by residues tryptophan 10, leucine 45, glutamate 66, and arginine 123.

It belongs to the class I-like SAM-binding methyltransferase superfamily. TPMT family.

The protein localises to the cytoplasm. It carries out the reaction S-adenosyl-L-methionine + a thiopurine = S-adenosyl-L-homocysteine + a thiopurine S-methylether.. The polypeptide is Thiopurine S-methyltransferase (Pseudomonas syringae pv. syringae (strain B728a)).